A 132-amino-acid chain; its full sequence is Small ribosomal subunit protein uS8c (132 aa).

This sequence belongs to the universal ribosomal protein uS8 family. Part of the 30S ribosomal subunit.

It is found in the plastid. The protein resides in the chloroplast. One of the primary rRNA binding proteins, it binds directly to 16S rRNA central domain where it helps coordinate assembly of the platform of the 30S subunit. This chain is Small ribosomal subunit protein uS8c (rps8), found in Calycanthus floridus var. glaucus (Eastern sweetshrub).